The following is a 123-amino-acid chain: Transmembrane protein 254 (123 aa).

The residue at position 2 (alanine 2) is an N-acetylalanine. Helical transmembrane passes span 15–35 (LFWF…VFWP), 61–81 (LCNG…YAIV), and 95–115 (LLWF…LIAY).

It is found in the membrane. The chain is Transmembrane protein 254 (TMEM254) from Pongo abelii (Sumatran orangutan).